An 85-amino-acid polypeptide reads, in one-letter code: Kappa-theraphotoxin-Cg1d (85 aa).

Residues 1–21 (MKVSVLITLAVLGVMFVWASA) form the signal peptide. The propeptide occupies 22–51 (AELEERGSDQRDSPAWLKSMERIFQSEERE). 3 cysteine pairs are disulfide-bonded: cysteine 52–cysteine 66, cysteine 59–cysteine 71, and cysteine 65–cysteine 78.

The protein belongs to the neurotoxin 10 (Hwtx-1) family. 28 (Jztx-11) subfamily. In terms of tissue distribution, expressed by the venom gland.

The protein resides in the secreted. Functionally, probable ion channel inhibitor. The sequence is that of Kappa-theraphotoxin-Cg1d from Chilobrachys guangxiensis (Chinese earth tiger tarantula).